The chain runs to 376 residues: UDP-N-acetylenolpyruvoylglucosamine reductase (376 aa).

Residues 48–219 (VGGPARHLVI…LDVTMQFNLG (172 aa)) form the FAD-binding PCMH-type domain. The active site involves Arg196. Ser274 functions as the Proton donor in the catalytic mechanism. Glu368 is an active-site residue.

The protein belongs to the MurB family. It depends on FAD as a cofactor.

The protein localises to the cytoplasm. The catalysed reaction is UDP-N-acetyl-alpha-D-muramate + NADP(+) = UDP-N-acetyl-3-O-(1-carboxyvinyl)-alpha-D-glucosamine + NADPH + H(+). It functions in the pathway cell wall biogenesis; peptidoglycan biosynthesis. Functionally, cell wall formation. This Cutibacterium acnes (strain DSM 16379 / KPA171202) (Propionibacterium acnes) protein is UDP-N-acetylenolpyruvoylglucosamine reductase.